Consider the following 322-residue polypeptide: uncharacterized protein (322 aa).

Residues 212 to 234 traverse the membrane as a helical segment; that stretch reads VCALLVGAISVATAGAAFSIIIV.

The protein localises to the membrane. This is an uncharacterized protein from Rickettsia prowazekii (strain Madrid E).